Reading from the N-terminus, the 575-residue chain is Inactive terpenoid synthase 20, chloroplastic (575 aa).

The transit peptide at 1-52 directs the protein to the chloroplast; it reads MEAITKNGSLSQTLVHCGPKSLSSFIPVRCLRFSKNPFPKKLVVTRARTSIN. Mg(2+) is bound by residues aspartate 332, aspartate 336, aspartate 474, threonine 478, and glutamate 482. Residues 332–336 carry the DDXXD motif motif; sequence DDLYD.

It belongs to the terpene synthase family. Tpsa subfamily. In terms of tissue distribution, predominantly expressed in roots but also in leaves and stems.

The protein localises to the plastid. It is found in the chloroplast. Functionally, does not possess diterpene synthase activity. This is Inactive terpenoid synthase 20, chloroplastic from Arabidopsis thaliana (Mouse-ear cress).